Consider the following 409-residue polypeptide: Peptidase T (409 aa).

Histidine 78 serves as a coordination point for Zn(2+). The active site involves aspartate 80. Aspartate 140 contributes to the Zn(2+) binding site. Catalysis depends on glutamate 173, which acts as the Proton acceptor. The Zn(2+) site is built by glutamate 174, aspartate 196, and histidine 379.

Belongs to the peptidase M20B family. The cofactor is Zn(2+).

The protein resides in the cytoplasm. The enzyme catalyses Release of the N-terminal residue from a tripeptide.. Its function is as follows. Cleaves the N-terminal amino acid of tripeptides. This chain is Peptidase T, found in Salmonella paratyphi A (strain ATCC 9150 / SARB42).